Consider the following 416-residue polypeptide: Phosphatidylinositol 5-phosphate 4-kinase type-2 gamma (416 aa).

The 378-residue stretch at 38–415 folds into the PIPK domain; it reads ASDPMLSVFM…RFREFISNIF (378 aa).

Phosphorylated, phosphorylation is induced by EGF.

It localises to the endoplasmic reticulum. It is found in the cytoplasm. The enzyme catalyses a 1,2-diacyl-sn-glycero-3-phospho-(1D-myo-inositol-5-phosphate) + ATP = a 1,2-diacyl-sn-glycero-3-phospho-(1D-myo-inositol-4,5-bisphosphate) + ADP + H(+). The catalysed reaction is 1,2-dihexadecanoyl-sn-glycero-3-phospho-(1D-myo-inositol-5-phosphate) + ATP = 1,2-dihexadecanoyl-sn-glycero-3-phospho-(1D-myo-inositol-4,5-bisphosphate) + ADP + H(+). It carries out the reaction 1,2-dihexadecanoyl-sn-glycero-3-phospho-(1D-myo-inositol-5-phosphate) + GTP = 1,2-dihexadecanoyl-sn-glycero-3-phospho-(1D-myo-inositol-4,5-bisphosphate) + GDP + H(+). Functionally, phosphatidylinositol 5-phosphate 4-kinase with low enzymatic activity. May be a GTP sensor, has higher GTP-dependent kinase activity than ATP-dependent kinase activity. The protein is Phosphatidylinositol 5-phosphate 4-kinase type-2 gamma (pip4k2c) of Danio rerio (Zebrafish).